Reading from the N-terminus, the 205-residue chain is Photosystem I assembly protein Ycf4 (205 aa).

2 helical membrane passes run 23-43 (WATV…SSYI) and 86-106 (LMCF…CLIF).

This sequence belongs to the Ycf4 family.

The protein localises to the plastid. The protein resides in the chloroplast thylakoid membrane. Functionally, seems to be required for the assembly of the photosystem I complex. This chain is Photosystem I assembly protein Ycf4, found in Tetradesmus obliquus (Green alga).